The primary structure comprises 473 residues: H(+)/Cl(-) exchange transporter ClcA (473 aa).

At 1 to 32 (MKTDTSTFLAQQIVRLRRRDQIRRLMQRDKTP) the chain is on the cytoplasmic side. Residues 33–69 (LAILFMAAVVGTLTGLVGVAFEKAVSWVQNMRIGALV) form a helical membrane-spanning segment. Residues 70 to 76 (QVADHAF) are Periplasmic-facing. Residues 77 to 100 (LLWPLAFILSALLAMVGYFLVRKF) traverse the membrane as a helical segment. Residues 106-110 (GSGIP) carry the Selectivity filter part_1 motif. Chloride is bound at residue Ser-107. The segment at residues 109 to 116 (IPEIEGAL) is an intramembrane region (helical). Residues 117 to 123 (EELRPVR) lie on the Cytoplasmic side of the membrane. 2 helical membrane passes run 124-141 (WWRV…TLGA) and 148-166 (EGPT…LDVF). The Selectivity filter part_2 signature appears at 146–150 (GREGP). Residues 167 to 176 (RMRSAEARHT) are Cytoplasmic-facing. 2 intramembrane regions (helical) span residues 177 to 189 (LLAT…LSAA) and 193 to 201 (PLAGILFII). At 202–214 (EEMRPQFRYNLIS) the chain is on the cytoplasmic side. Residues 215–232 (IKAVFTGVIMSSIVFRIF) form a helical membrane-spanning segment. Residues 233–252 (NGEAPIIEVGKLSDAPVNTL) lie on the Periplasmic side of the membrane. A helical membrane pass occupies residues 253–281 (WLYLILGIIFGCVGPVFNSLVLRTQDMFQ). The Cytoplasmic portion of the chain corresponds to 282–287 (RFHGGE). Residues 288 to 309 (IKKWVLMGGAIGGLCGILGLIE) traverse the membrane as a helical segment. The Periplasmic segment spans residues 310–329 (PEAAGGGFNLIPIAAAGNFS). A run of 2 helical transmembrane segments spans residues 330–349 (VGLL…LCFS) and 355–376 (GIFA…MAAA). A Selectivity filter part_3 motif is present at residues 355-359 (GIFAP). Ile-356 and Phe-357 together coordinate chloride. The Periplasmic segment spans residues 377–386 (VLFPQYHLEA). The segment at residues 387-401 (GTFAIAGMGALMAAS) is an intramembrane region (helical). Residues 402–404 (VRA) constitute an intramembrane region (note=Loop between two helices). Residues 405–416 (PLTGIVLVLEMT) constitute an intramembrane region (helical). Residues 417–421 (DNYQL) constitute an intramembrane region (note=Loop between two helices). The helical transmembrane segment at 422-438 (ILPMIITCLGATLLAQF) threads the bilayer. Over 439 to 473 (LGGKPLYSTILARTLAKQDAEQAAKNQNAPAGENT) the chain is Cytoplasmic. Tyr-445 contributes to the chloride binding site.

The protein belongs to the chloride channel (TC 2.A.49) family. ClcA subfamily. Homodimer.

The protein resides in the cell inner membrane. It catalyses the reaction 2 chloride(in) + H(+)(out) = 2 chloride(out) + H(+)(in). In terms of biological role, proton-coupled chloride transporter. Functions as antiport system and exchanges two chloride ions for 1 proton. Probably acts as an electrical shunt for an outwardly-directed proton pump that is linked to amino acid decarboxylation, as part of the extreme acid resistance (XAR) response. The sequence is that of H(+)/Cl(-) exchange transporter ClcA from Salmonella agona (strain SL483).